A 352-amino-acid polypeptide reads, in one-letter code: Phenylalanine--tRNA ligase alpha subunit (352 aa).

Glu258 provides a ligand contact to Mg(2+).

This sequence belongs to the class-II aminoacyl-tRNA synthetase family. Phe-tRNA synthetase alpha subunit type 1 subfamily. As to quaternary structure, tetramer of two alpha and two beta subunits. The cofactor is Mg(2+).

It localises to the cytoplasm. It catalyses the reaction tRNA(Phe) + L-phenylalanine + ATP = L-phenylalanyl-tRNA(Phe) + AMP + diphosphate + H(+). This Staphylococcus aureus (strain Mu3 / ATCC 700698) protein is Phenylalanine--tRNA ligase alpha subunit.